A 377-amino-acid chain; its full sequence is N-acetylgalactosamine-6-phosphate deacetylase (377 aa).

Glutamate 125 lines the a divalent metal cation pocket. Substrate is bound at residue 136–137 (AH). Residues histidine 191 and histidine 212 each contribute to the a divalent metal cation site. Substrate is bound by residues 215 to 216 (NG), arginine 223, and 244 to 247 (DGHH). The active-site Proton donor/acceptor is aspartate 269. A substrate-binding site is contributed by 302-304 (LAG).

The protein belongs to the metallo-dependent hydrolases superfamily. NagA family. A divalent metal cation is required as a cofactor.

The catalysed reaction is N-acetyl-D-galactosamine 6-phosphate + H2O = D-galactosamine 6-phosphate + acetate. Its function is as follows. Catalyzes the deacetylation of N-acetyl-D-galactosamine 6-phosphate to D-galactosamine 6-phosphate. Can probably also catalyze the deacetylation of N-acetyl-D-glucosamine 6-phosphate to D-glucosamine 6-phosphate. The chain is N-acetylgalactosamine-6-phosphate deacetylase (agaA) from Escherichia coli O157:H7.